Here is a 117-residue protein sequence, read N- to C-terminus: Basic phospholipase A2 pseudexin A chain (117 aa).

7 cysteine pairs are disulfide-bonded: Cys-11–Cys-71, Cys-27–Cys-117, Cys-29–Cys-45, Cys-44–Cys-98, Cys-51–Cys-91, Cys-60–Cys-84, and Cys-78–Cys-89. Ca(2+) contacts are provided by Tyr-28, Gly-30, and Gly-32. His-48 is a catalytic residue. Asp-49 lines the Ca(2+) pocket. Asp-92 is an active-site residue.

This sequence belongs to the phospholipase A2 family. Group I subfamily. D49 sub-subfamily. Ca(2+) is required as a cofactor. In terms of tissue distribution, expressed by the venom gland.

Its subcellular location is the secreted. The catalysed reaction is a 1,2-diacyl-sn-glycero-3-phosphocholine + H2O = a 1-acyl-sn-glycero-3-phosphocholine + a fatty acid + H(+). Functionally, PLA2 catalyzes the calcium-dependent hydrolysis of the 2-acyl groups in 3-sn-phosphoglycerides. The chain is Basic phospholipase A2 pseudexin A chain from Pseudechis porphyriacus (Red-bellied black snake).